Reading from the N-terminus, the 539-residue chain is Lipid scramblase CLPTM1L (539 aa).

Over 1 to 10 (MWSGRSSFTS) the chain is Cytoplasmic. The helical transmembrane segment at 11-31 (LVVGVFLVYVVHTCWVMYGIV) threads the bilayer. The Extracellular portion of the chain corresponds to 32–285 (YTRPCSGDSN…LKGIFVDTNL (254 aa)). N91 and N101 each carry an N-linked (GlcNAc...) asparagine glycan. A helical membrane pass occupies residues 286–306 (YLLALTFFVAAFHLLFDFLAF). The Cytoplasmic portion of the chain corresponds to 307–325 (KSDISFWKKKKSMIGMSTK). The chain crosses the membrane as a helical span at residues 326–342 (AVLWRCFSTVVIFLFLL). Residues 343 to 403 (DEQTSLLVLI…TEKYDAQAMK (61 aa)) are Extracellular-facing. Residues 404–424 (YLSYLLYPLCVGGAVYSLLNI) traverse the membrane as a helical segment. Residues 425–429 (KYKSW) lie on the Cytoplasmic side of the membrane. A helical membrane pass occupies residues 430 to 450 (YSWLINSFVNGVYAFGFLFML). The Extracellular portion of the chain corresponds to 451–539 (PQLFVNYKMK…EQPKRKPHPD (89 aa)).

This sequence belongs to the CLPTM1 family.

The protein localises to the endoplasmic reticulum membrane. It catalyses the reaction a 6-(alpha-D-glucosaminyl)-1-(1,2-diacyl-sn-glycero-3-phospho)-1D-myo-inositol(in) = a 6-(alpha-D-glucosaminyl)-1-(1,2-diacyl-sn-glycero-3-phospho)-1D-myo-inositol(out). The enzyme catalyses 6-(alpha-D-glucosaminyl)-(1-octadecanoyl,2-(9Z)-octadecenoyl-sn-glycero-3-phospho)-1D-myo-inositol(in) = 6-(alpha-D-glucosaminyl)-(1-octadecanoyl,2-(9Z)-octadecenoyl-sn-glycero-3-phospho)-1D-myo-inositol(out). The catalysed reaction is a 1,2-diacyl-sn-glycero-3-phospho-(1D-myo-inositol)(in) = a 1,2-diacyl-sn-glycero-3-phospho-(1D-myo-inositol)(out). It carries out the reaction a 1,2-diacyl-sn-glycero-3-phosphocholine(in) = a 1,2-diacyl-sn-glycero-3-phosphocholine(out). It catalyses the reaction a 1,2-diacyl-sn-glycero-3-phosphoethanolamine(in) = a 1,2-diacyl-sn-glycero-3-phosphoethanolamine(out). Functionally, scramblase that mediates the translocation of glucosaminylphosphatidylinositol (alpha-D-GlcN-(1-6)-(1,2-diacyl-sn-glycero-3-phospho)-1D-myo-inositol, GlcN-PI) across the endoplasmic reticulum (ER) membrane, from the cytosolic leaflet to the luminal leaflet of the ER membrane, where it participates in the biosynthesis of glycosylphosphatidylinositol (GPI). GPI is a lipid glycoconjugate involved in post-translational modification of proteins. Can also translocate 1,2-diacyl-sn-glycero-3-phospho-(1D-myo-inositol) (phosphatidylinositol or PI), as well as several other phospholipids (1,2-diacyl-sn-glycero-3-phosphocholine, 1,2-diacyl-sn-glycero-3-phosphoethanolamine), and N-acetylglucosaminylphosphatidylinositol (GlcNAc-PI) in vitro. The protein is Lipid scramblase CLPTM1L (Clptm1l) of Mus musculus (Mouse).